We begin with the raw amino-acid sequence, 501 residues long: Proline--tRNA ligase (501 aa).

This sequence belongs to the class-II aminoacyl-tRNA synthetase family. ProS type 3 subfamily. Homodimer.

It is found in the cytoplasm. The enzyme catalyses tRNA(Pro) + L-proline + ATP = L-prolyl-tRNA(Pro) + AMP + diphosphate. Its function is as follows. Catalyzes the attachment of proline to tRNA(Pro) in a two-step reaction: proline is first activated by ATP to form Pro-AMP and then transferred to the acceptor end of tRNA(Pro). In Halobacterium salinarum (strain ATCC 29341 / DSM 671 / R1), this protein is Proline--tRNA ligase.